The chain runs to 165 residues: UPF0303 protein Bxeno_A1932 (165 aa).

The protein belongs to the UPF0303 family.

The polypeptide is UPF0303 protein Bxeno_A1932 (Paraburkholderia xenovorans (strain LB400)).